The primary structure comprises 125 residues: Ribonuclease P protein component (125 aa).

This sequence belongs to the RnpA family. Consists of a catalytic RNA component (M1 or rnpB) and a protein subunit.

It carries out the reaction Endonucleolytic cleavage of RNA, removing 5'-extranucleotides from tRNA precursor.. Its function is as follows. RNaseP catalyzes the removal of the 5'-leader sequence from pre-tRNA to produce the mature 5'-terminus. It can also cleave other RNA substrates such as 4.5S RNA. The protein component plays an auxiliary but essential role in vivo by binding to the 5'-leader sequence and broadening the substrate specificity of the ribozyme. In Oleidesulfovibrio alaskensis (strain ATCC BAA-1058 / DSM 17464 / G20) (Desulfovibrio alaskensis), this protein is Ribonuclease P protein component.